Reading from the N-terminus, the 226-residue chain is Ribonuclease 3 (226 aa).

The RNase III domain maps to 2 to 129 (IESISKIIKY…LIGAIYLDGG (128 aa)). Glutamate 42 is a binding site for Mg(2+). Aspartate 46 is an active-site residue. The Mg(2+) site is built by asparagine 115 and glutamate 118. Glutamate 118 is a catalytic residue. The DRBM domain maps to 154–223 (DAKTILQELV…ASLMLNQIHN (70 aa)).

It belongs to the ribonuclease III family. In terms of assembly, homodimer. Mg(2+) is required as a cofactor.

It localises to the cytoplasm. It carries out the reaction Endonucleolytic cleavage to 5'-phosphomonoester.. Its function is as follows. Digests double-stranded RNA. Involved in the processing of primary rRNA transcript to yield the immediate precursors to the large and small rRNAs (23S and 16S). Processes some mRNAs, and tRNAs when they are encoded in the rRNA operon. Processes pre-crRNA and tracrRNA of type II CRISPR loci if present in the organism. This chain is Ribonuclease 3, found in Ehrlichia chaffeensis (strain ATCC CRL-10679 / Arkansas).